The chain runs to 184 residues: ADP-ribosylation factor-like protein 2 (184 aa).

G2 carries N-myristoyl glycine lipidation. Residues G23–T30, D66–Q70, and N125–D128 each bind GTP.

The protein belongs to the small GTPase superfamily. Arf family. As to expression, ubiquitously expressed.

Its function is as follows. GTP-binding protein involved in protein trafficking; may modulate vesicle budding and uncoating within the Golgi apparatus. In Drosophila melanogaster (Fruit fly), this protein is ADP-ribosylation factor-like protein 2 (Arl2).